The following is a 212-amino-acid chain: Calaxin (212 aa).

3 EF-hand domains span residues Thr65–Gly100, Thr101–Lys136, and Gly146–Leu181. The Ca(2+) site is built by Asp78, Asp80, Asp82, Cys84, Glu89, Asp114, Asn116, Asp118, Glu125, Asp159, Asp161, Asp163, Lys165, and Asp170.

In terms of assembly, component of the outer dynein arm-docking complex along with ODAD1, ODAD2, ODAD3 and ODAD4.

It is found in the cytoplasm. It localises to the cytoskeleton. Its subcellular location is the cilium axoneme. The protein resides in the cell projection. The protein localises to the cilium. It is found in the flagellum. In terms of biological role, component of the outer dynein arm-docking complex (ODA-DC) that mediates outer dynein arms (ODA) binding onto the doublet microtubule. Seems to regulate the assembly of both ODAs and their axonemal docking complex onto ciliary microtubules. Regulates ciliary and flagellar motility and is required for cilia-driven determination of body laterality. The polypeptide is Calaxin (Clxn) (Mus musculus (Mouse)).